We begin with the raw amino-acid sequence, 366 residues long: Chorismate synthase (366 aa).

Residue Arg46 participates in NADP(+) binding. FMN-binding positions include 122–124 (RSS), 243–244 (NG), Gly284, 299–303 (KPTPS), and Arg325.

It belongs to the chorismate synthase family. As to quaternary structure, homotetramer. Requires FMNH2 as cofactor.

It carries out the reaction 5-O-(1-carboxyvinyl)-3-phosphoshikimate = chorismate + phosphate. It functions in the pathway metabolic intermediate biosynthesis; chorismate biosynthesis; chorismate from D-erythrose 4-phosphate and phosphoenolpyruvate: step 7/7. Its function is as follows. Catalyzes the anti-1,4-elimination of the C-3 phosphate and the C-6 proR hydrogen from 5-enolpyruvylshikimate-3-phosphate (EPSP) to yield chorismate, which is the branch point compound that serves as the starting substrate for the three terminal pathways of aromatic amino acid biosynthesis. This reaction introduces a second double bond into the aromatic ring system. In Campylobacter hominis (strain ATCC BAA-381 / DSM 21671 / CCUG 45161 / LMG 19568 / NCTC 13146 / CH001A), this protein is Chorismate synthase.